The chain runs to 365 residues: Alanine racemase (365 aa).

The active-site Proton acceptor; specific for D-alanine is the Lys32. N6-(pyridoxal phosphate)lysine is present on Lys32. A substrate-binding site is contributed by Arg128. Catalysis depends on Tyr257, which acts as the Proton acceptor; specific for L-alanine. Met305 is a binding site for substrate.

Belongs to the alanine racemase family. Pyridoxal 5'-phosphate serves as cofactor.

It carries out the reaction L-alanine = D-alanine. The protein operates within amino-acid biosynthesis; D-alanine biosynthesis; D-alanine from L-alanine: step 1/1. Its function is as follows. Catalyzes the interconversion of L-alanine and D-alanine. May also act on other amino acids. In Francisella tularensis subsp. novicida (strain U112), this protein is Alanine racemase (alr).